The chain runs to 161 residues: Putative pre-16S rRNA nuclease (161 aa).

Belongs to the YqgF nuclease family.

It localises to the cytoplasm. Functionally, could be a nuclease involved in processing of the 5'-end of pre-16S rRNA. The protein is Putative pre-16S rRNA nuclease of Prochlorococcus marinus (strain MIT 9313).